We begin with the raw amino-acid sequence, 639 residues long: 1,4-alpha-glucan branching enzyme GlgB (639 aa).

Catalysis depends on Asp313, which acts as the Nucleophile. Glu366 acts as the Proton donor in catalysis.

Belongs to the glycosyl hydrolase 13 family. GlgB subfamily. Monomer.

It carries out the reaction Transfers a segment of a (1-&gt;4)-alpha-D-glucan chain to a primary hydroxy group in a similar glucan chain.. The protein operates within glycan biosynthesis; glycogen biosynthesis. Catalyzes the formation of the alpha-1,6-glucosidic linkages in glycogen by scission of a 1,4-alpha-linked oligosaccharide from growing alpha-1,4-glucan chains and the subsequent attachment of the oligosaccharide to the alpha-1,6 position. This is 1,4-alpha-glucan branching enzyme GlgB (glgB) from Butyrivibrio fibrisolvens.